The primary structure comprises 274 residues: Ribosomal RNA small subunit methyltransferase A (274 aa).

Residues Asn17, Leu19, Gly44, Glu65, Asp89, and Asn111 each contribute to the S-adenosyl-L-methionine site.

It belongs to the class I-like SAM-binding methyltransferase superfamily. rRNA adenine N(6)-methyltransferase family. RsmA subfamily.

The protein localises to the cytoplasm. It carries out the reaction adenosine(1518)/adenosine(1519) in 16S rRNA + 4 S-adenosyl-L-methionine = N(6)-dimethyladenosine(1518)/N(6)-dimethyladenosine(1519) in 16S rRNA + 4 S-adenosyl-L-homocysteine + 4 H(+). Specifically dimethylates two adjacent adenosines (A1518 and A1519) in the loop of a conserved hairpin near the 3'-end of 16S rRNA in the 30S particle. May play a critical role in biogenesis of 30S subunits. This chain is Ribosomal RNA small subunit methyltransferase A, found in Buchnera aphidicola subsp. Schizaphis graminum (strain Sg).